A 309-amino-acid polypeptide reads, in one-letter code: Taste receptor type 2 member 124 (309 aa).

The Extracellular segment spans residues 1–7 (MVPVLHS). A helical transmembrane segment spans residues 8–28 (LSTIILIAEFVWGNLSNGLIV). The Cytoplasmic segment spans residues 29–46 (LKNCIDWINKKELSTVDQ). Residues 47–67 (ILIVLAISRISLIWETLIIWV) traverse the membrane as a helical segment. Topologically, residues 68-86 (KDQLISSITIEELKIIVFS) are extracellular. A helical transmembrane segment spans residues 87–107 (FILSSHFSLWLATALSIFYLF). Topologically, residues 108–127 (RIPNCYWQIFLYLKWRIKQL) are cytoplasmic. A helical membrane pass occupies residues 128–148 (IVHMLLGSLVFLVANMIQITI). Residues 149-183 (TLEERFYQYGGNTSVNSMETEFSILIELMLFNMTM) lie on the Extracellular side of the membrane. N-linked (GlcNAc...) asparagine glycosylation is found at Asn-160 and Asn-180. A helical transmembrane segment spans residues 184–204 (FSIIPFSLALISFLLLIFSLW). At 205–230 (KHLQKMPLNSRGDRDPSATAHRNALR) the chain is on the cytoplasmic side. Residues 231-251 (ILVSFLLLYTIYFLSLLISWV) form a helical membrane-spanning segment. Residues 252 to 261 (AQKNQSELVH) are Extracellular-facing. An N-linked (GlcNAc...) asparagine glycan is attached at Asn-255. Residues 262 to 282 (IICMITSLVYPSFHSYILILG) traverse the membrane as a helical segment. The Cytoplasmic portion of the chain corresponds to 283-309 (NYKLKQTSLWVMRQLGCRMKRQNTPTT).

This sequence belongs to the G-protein coupled receptor T2R family.

It localises to the membrane. Functionally, putative taste receptor which may play a role in the perception of bitterness. The protein is Taste receptor type 2 member 124 of Mus musculus (Mouse).